Here is a 110-residue protein sequence, read N- to C-terminus: Defensin-like protein 296 (110 aa).

An N-terminal signal peptide occupies residues 1 to 28 (MASKITIFFVLALVVVCTMMVCIPTATA). Disulfide bonds link Cys34/Cys52, Cys40/Cys57, Cys45/Cys59, Cys81/Cys102, Cys87/Cys107, and Cys95/Cys109.

It belongs to the DEFL family.

It is found in the secreted. The sequence is that of Defensin-like protein 296 from Arabidopsis thaliana (Mouse-ear cress).